The primary structure comprises 309 residues: SERTA domain-containing protein 2 (309 aa).

Disordered regions lie at residues 1–30 (MLGK…GPSR), 79–114 (EGSL…CDLG), and 175–220 (PTST…MDSL). A compositionally biased stretch (basic and acidic residues) spans 8–18 (RKFDEHEDGLE). Residues 33–80 (YTLQRQTIFNISLMKLYNHRPLTEPSLQKTVLINNMLRRIQEELKQEG) enclose the SERTA domain. 2 stretches are compositionally biased toward low complexity: residues 89 to 99 (SSQPSNSLSDS) and 175 to 189 (PTST…AAPE). Residues 204–216 (EGPEEGRTDDSRF) show a composition bias toward basic and acidic residues. Residues 230-306 (TGFLTDLTLD…TELDHIMEVL (77 aa)) are required for transactivation activity. Positions 233 to 238 (LTDLTL) match the Nuclear export signal (NES) motif.

In terms of assembly, interacts with XPO1; which mediates nuclear export. Interacts with TFDP1; modulates transactivation activity of TFDP1/E2F complexes. Polyubiquitinated, which promotes proteasomal degradation. In terms of tissue distribution, expressed in white and brown adipose tissue.

Its subcellular location is the nucleus. It is found in the cytoplasm. Its function is as follows. Acts at E2F-responsive promoters as coregulator to integrate signals provided by PHD- and/or bromodomain-containing transcription factors. May act as coactivator as well as corepressor of E2F1-TFDP1 and E2F4-TFDP1 complexes on E2F consensus binding sites, which would activate or inhibit E2F-target genes expression. Modulates fat storage by down-regulating the expression of key genes involved in adipocyte lipolysis, thermogenesis and oxidative metabolism. This chain is SERTA domain-containing protein 2 (Sertad2), found in Mus musculus (Mouse).